Consider the following 402-residue polypeptide: Multidrug resistance protein MdtH (402 aa).

Over 1 to 12 (MSRVSQARNLGK) the chain is Cytoplasmic. Residues 13–33 (YFLLIDNMLVVLGFFVVFPLI) traverse the membrane as a helical segment. Residues 34 to 98 (SIRFVDQMGW…GFATMGIAHE (65 aa)) lie on the Periplasmic side of the membrane. The helical transmembrane segment at 99–116 (PWLLWFSCLLSGLGGTLF) threads the bilayer. At 117–138 (DPPRSALVVKLIRPQQRGRFFS) the chain is on the cytoplasmic side. Residues 139–159 (LLMMQDSASAVIGALLGSWLL) form a helical membrane-spanning segment. The Periplasmic segment spans residues 160–164 (QYDFR). Residues 165 to 185 (LVCATGPVLFVLCAAFNAWLL) form a helical membrane-spanning segment. At 186–213 (PAWKLSTVRTPVREGMTRVMRDKRFVTY) the chain is on the cytoplasmic side. Residues 214–234 (VLTLAGYYMLAVQVMLMLPIM) form a helical membrane-spanning segment. Residues 235–243 (VNDVAGAPS) lie on the Periplasmic side of the membrane. The chain crosses the membrane as a helical span at residues 244-264 (AVKWMYAIEACLSLTLLYPIA). Residues 265–276 (RWSEKHFRLEHR) lie on the Cytoplasmic side of the membrane. The chain crosses the membrane as a helical span at residues 277–297 (LMAGLLIMSLSMMPVGMVSGL). The Periplasmic segment spans residues 298–299 (QQ). Residues 300 to 320 (LFTLICLFYIGSIIAEPARET) traverse the membrane as a helical segment. At 321 to 339 (LSASLADARARGSYMGFSR) the chain is on the cytoplasmic side. A helical membrane pass occupies residues 340–360 (LGLAIGGAIGYIGGGWLFDLG). Residues 361 to 367 (KSAHQPE) lie on the Periplasmic side of the membrane. Residues 368–388 (LPWMMLGIIGIFTFLALGWQF) traverse the membrane as a helical segment. Residues 389–402 (SQKRAARRLLERDA) lie on the Cytoplasmic side of the membrane.

It belongs to the major facilitator superfamily. DHA1 family. MdtH (TC 2.A.1.2.21) subfamily.

It localises to the cell inner membrane. This chain is Multidrug resistance protein MdtH, found in Shigella flexneri serotype 5b (strain 8401).